We begin with the raw amino-acid sequence, 502 residues long: Histidine--tRNA ligase (502 aa).

It belongs to the class-II aminoacyl-tRNA synthetase family. As to quaternary structure, homodimer.

It is found in the cytoplasm. The catalysed reaction is tRNA(His) + L-histidine + ATP = L-histidyl-tRNA(His) + AMP + diphosphate + H(+). The chain is Histidine--tRNA ligase from Brucella ovis (strain ATCC 25840 / 63/290 / NCTC 10512).